A 328-amino-acid polypeptide reads, in one-letter code: uncharacterized protein (328 aa).

A disordered region spans residues 296–328; it reads APEGDLEDEIIEVDPEQPRDDPYRRLRTPPPGG. Positions 299-310 are enriched in acidic residues; sequence GDLEDEIIEVDP.

Functionally, possibly necessary for replication. This is an uncharacterized protein from Halobacterium sp. (strain GN101).